Reading from the N-terminus, the 1028-residue chain is Beta-galactosidase (1028 aa).

Residues Asn104 and Asp203 each coordinate substrate. Asp203 is a binding site for Na(+). Glu418, His420, and Glu463 together coordinate Mg(2+). Substrate-binding positions include Glu463 and Glu539 to His542. The active-site Proton donor is the Glu463. Glu539 functions as the Nucleophile in the catalytic mechanism. A Mg(2+)-binding site is contributed by Asn599. 2 residues coordinate Na(+): Phe603 and Asn606. Asn606 and Trp1004 together coordinate substrate.

This sequence belongs to the glycosyl hydrolase 2 family. As to quaternary structure, homotetramer. It depends on Mg(2+) as a cofactor. Na(+) serves as cofactor.

It carries out the reaction Hydrolysis of terminal non-reducing beta-D-galactose residues in beta-D-galactosides.. The sequence is that of Beta-galactosidase from Enterobacter sp. (strain 638).